The primary structure comprises 357 residues: AA9 family lytic polysaccharide monooxygenase B (357 aa).

The signal sequence occupies residues 1-18; that stretch reads MKFSSVLALAASAKLVAS. 2 residues coordinate Cu(2+): His-19 and His-101. Residues 19–234 form a catalytic region; that stretch reads HATVFAVWIN…IPGPAVWDGA (216 aa). A disulfide bridge links Cys-61 with Cys-182. Residues His-168 and Gln-177 each coordinate O2. Residue Tyr-179 participates in Cu(2+) binding. Residues 235–318 form a ser/Thr-rich linker region; it reads SSGSGSSGSG…SAAPTGGTGT (84 aa). A disordered region spans residues 292–317; that stretch reads SVRPTTSAAPTTSAPTSSAAPTGGTG. The segment covering 295–313 has biased composition (low complexity); it reads PTTSAAPTTSAPTSSAAPT. The 37-residue stretch at 319–355 folds into the CBM1 domain; it reads GSIQIYQQCGGMNYKGATGCASGLTCKQWNPYYHQCV.

Belongs to the polysaccharide monooxygenase AA9 family. Cu(2+) serves as cofactor.

It is found in the secreted. The catalysed reaction is [(1-&gt;4)-beta-D-glucosyl]n+m + reduced acceptor + O2 = 4-dehydro-beta-D-glucosyl-[(1-&gt;4)-beta-D-glucosyl]n-1 + [(1-&gt;4)-beta-D-glucosyl]m + acceptor + H2O.. Functionally, lytic polysaccharide monooxygenase (LPMO) that depolymerizes crystalline and amorphous polysaccharides via the oxidation of scissile alpha- or beta-(1-4)-glycosidic bonds, yielding C4 oxidation products. Catalysis by LPMOs requires the reduction of the active-site copper from Cu(II) to Cu(I) by a reducing agent and H(2)O(2) or O(2) as a cosubstrate. Active on carboxymethylcellulose (CMC), hydroxyethylcellulose (HEC) and beta-glucan. Also active on soluble cellohexaose, a property that is restricted to only a few characterized LPMOs. This chain is AA9 family lytic polysaccharide monooxygenase B, found in Emericella nidulans (strain FGSC A4 / ATCC 38163 / CBS 112.46 / NRRL 194 / M139) (Aspergillus nidulans).